The chain runs to 163 residues: Phosphopantetheine adenylyltransferase (163 aa).

Position 10 (threonine 10) interacts with substrate. ATP-binding positions include 10 to 11 and histidine 18; that span reads TF. Positions 42, 74, and 88 each coordinate substrate. Residues 89-91, glutamate 99, and 124-130 contribute to the ATP site; these read GLR and NSFISST.

The protein belongs to the bacterial CoaD family. As to quaternary structure, homohexamer. It depends on Mg(2+) as a cofactor.

The protein resides in the cytoplasm. It catalyses the reaction (R)-4'-phosphopantetheine + ATP + H(+) = 3'-dephospho-CoA + diphosphate. The protein operates within cofactor biosynthesis; coenzyme A biosynthesis; CoA from (R)-pantothenate: step 4/5. Its function is as follows. Reversibly transfers an adenylyl group from ATP to 4'-phosphopantetheine, yielding dephospho-CoA (dPCoA) and pyrophosphate. In Shewanella sp. (strain MR-4), this protein is Phosphopantetheine adenylyltransferase.